Here is a 652-residue protein sequence, read N- to C-terminus: Acetyl-coenzyme A synthetase (652 aa).

Residues 191-194, threonine 311, and asparagine 335 contribute to the CoA site; that span reads RAGR. Residues 387–389, 411–416, aspartate 500, and arginine 515 contribute to the ATP site; these read GEP and DTWWQT. Serine 523 lines the CoA pocket. Residue arginine 526 coordinates ATP. Residues valine 537, histidine 539, and isoleucine 542 each contribute to the Mg(2+) site. Residue arginine 584 participates in CoA binding. Lysine 609 bears the N6-acetyllysine mark.

Belongs to the ATP-dependent AMP-binding enzyme family. Requires Mg(2+) as cofactor. In terms of processing, acetylated. Deacetylation by the SIR2-homolog deacetylase activates the enzyme.

The catalysed reaction is acetate + ATP + CoA = acetyl-CoA + AMP + diphosphate. Its function is as follows. Catalyzes the conversion of acetate into acetyl-CoA (AcCoA), an essential intermediate at the junction of anabolic and catabolic pathways. Acs undergoes a two-step reaction. In the first half reaction, Acs combines acetate with ATP to form acetyl-adenylate (AcAMP) intermediate. In the second half reaction, it can then transfer the acetyl group from AcAMP to the sulfhydryl group of CoA, forming the product AcCoA. Functionally, enables the cell to use acetate during aerobic growth to generate energy via the TCA cycle, and biosynthetic compounds via the glyoxylate shunt. Acetylates CheY, the response regulator involved in flagellar movement and chemotaxis. The protein is Acetyl-coenzyme A synthetase of Escherichia coli O157:H7.